A 59-amino-acid chain; its full sequence is Large ribosomal subunit protein bL32 (59 aa).

The disordered stretch occupies residues 1 to 59 (MAVQQNKKSPSKRGMHRAHDFLTTPPLAVESTTGEAHLRHHISPAGFYRGKKVTKGKGE). Basic residues predominate over residues 49–59 (RGKKVTKGKGE).

It belongs to the bacterial ribosomal protein bL32 family.

This is Large ribosomal subunit protein bL32 from Dechloromonas aromatica (strain RCB).